Here is a 585-residue protein sequence, read N- to C-terminus: Arginine--tRNA ligase (585 aa).

The 'HIGH' region signature appears at 131–141 (ANPTGPMHVGH).

This sequence belongs to the class-I aminoacyl-tRNA synthetase family. As to quaternary structure, monomer.

It is found in the cytoplasm. It carries out the reaction tRNA(Arg) + L-arginine + ATP = L-arginyl-tRNA(Arg) + AMP + diphosphate. The chain is Arginine--tRNA ligase from Bartonella henselae (strain ATCC 49882 / DSM 28221 / CCUG 30454 / Houston 1) (Rochalimaea henselae).